Reading from the N-terminus, the 395-residue chain is MAKAKFERTKPHVNIGTIGHVDHGKTTLTAAITTVLAKQGKAEAKAYDQIDAAPEERERGITISTAHVEYETDARHYAHVDCPGHADYVKNMITGAAQMDGAILVVSAADGPMPQTREHILLSRQVGVPYIVVFLNKCDMVDDEELLELVEMEVRDLLSEYDFPGDEVPVIKGSALKALEGDPQWEEKIIELMNAVDEYIPTPQREVDKPFMMPIEDVFSITGRGTVATGRVERGTLKVGDPVEIIGLSDEPKTTTVTGVEMFRKLLDQAEAGDNIGALLRGVSRDEVERGQVLAKPGSITPHTKFKAQVYVLTKEEGGRHTPFFSNYRPQFYFRTTDVTGIITLPEGVEMVMPGDNVEMTVELIAPIAIEEGTKFSIREGGRTVGAGSVSEIIE.

The tr-type G domain occupies 10 to 204 (KPHVNIGTIG…AVDEYIPTPQ (195 aa)). The G1 stretch occupies residues 19–26 (GHVDHGKT). 19–26 (GHVDHGKT) lines the GTP pocket. Thr26 provides a ligand contact to Mg(2+). The tract at residues 60 to 64 (GITIS) is G2. Residues 81-84 (DCPG) form a G3 region. GTP contacts are provided by residues 81–85 (DCPGH) and 136–139 (NKCD). The interval 136–139 (NKCD) is G4. The segment at 174-176 (SAL) is G5.

This sequence belongs to the TRAFAC class translation factor GTPase superfamily. Classic translation factor GTPase family. EF-Tu/EF-1A subfamily. In terms of assembly, monomer.

It localises to the cytoplasm. It catalyses the reaction GTP + H2O = GDP + phosphate + H(+). Its function is as follows. GTP hydrolase that promotes the GTP-dependent binding of aminoacyl-tRNA to the A-site of ribosomes during protein biosynthesis. In Geobacillus kaustophilus (strain HTA426), this protein is Elongation factor Tu.